Consider the following 197-residue polypeptide: Adenylate kinase (197 aa).

16–21 serves as a coordination point for ATP; the sequence is GAGKGT. An NMP region spans residues 36 to 65; the sequence is STGDILRDHVARGTALGQRVKPILDAGQLV. Residues threonine 37, arginine 42, 63 to 65, 90 to 93, and glutamine 97 contribute to the AMP site; these read QLV and GFPR. Residues 131–147 form an LID region; sequence ERGRQAALRGEPVRSDD. ATP is bound at residue arginine 132. Arginine 144 and arginine 155 together coordinate AMP. An ATP-binding site is contributed by glycine 183.

It belongs to the adenylate kinase family. As to quaternary structure, monomer.

It is found in the cytoplasm. It catalyses the reaction AMP + ATP = 2 ADP. It participates in purine metabolism; AMP biosynthesis via salvage pathway; AMP from ADP: step 1/1. Functionally, catalyzes the reversible transfer of the terminal phosphate group between ATP and AMP. Plays an important role in cellular energy homeostasis and in adenine nucleotide metabolism. The polypeptide is Adenylate kinase (Deinococcus geothermalis (strain DSM 11300 / CIP 105573 / AG-3a)).